Reading from the N-terminus, the 373-residue chain is Heterogeneous nuclear ribonucleoprotein A3 homolog 1 (373 aa).

The disordered stretch occupies residues 1-25; that stretch reads MPRGGMDDHWPSSDDQGHDPKEPEQ. RRM domains follow at residues 27–110 and 118–206; these read RKLF…DSAR and KKIF…SAQR. 2 disordered regions span residues 196–218 and 319–373; these read KQEMQTASAQRGRGGGGSNFMGR and DFGN…GRRF. The span at 207–218 shows a compositional bias: gly residues; that stretch reads GRGGGGSNFMGR. Residues 319–333 show a composition bias toward low complexity; it reads DFGNYGGQQQSNYGP. Residues 334 to 373 show a composition bias toward gly residues; the sequence is MKGGSFSGRSSGGSGSGPYGGGYGSGGGGGGGGSYGGRRF.

The protein localises to the nucleus. The polypeptide is Heterogeneous nuclear ribonucleoprotein A3 homolog 1 (Xenopus laevis (African clawed frog)).